Here is a 556-residue protein sequence, read N- to C-terminus: Formate--tetrahydrofolate ligase (556 aa).

65-72 contacts ATP; it reads TPAGEGKS.

The protein belongs to the formate--tetrahydrofolate ligase family.

It catalyses the reaction (6S)-5,6,7,8-tetrahydrofolate + formate + ATP = (6R)-10-formyltetrahydrofolate + ADP + phosphate. Its pathway is one-carbon metabolism; tetrahydrofolate interconversion. The chain is Formate--tetrahydrofolate ligase from Streptococcus suis (strain 98HAH33).